The sequence spans 532 residues: MITSSLLSRPGRTAPAGSAALRCRDRLAQRVADQVGPDGLVKAPCASRVLESSLLLRLLTVEGYAPHVRERLTRYLRNRLEHRPPDAIQGAVARAALGERLPGGCFAERALASFDHFTADRKRLMFTTLLAELGVTVFPRTRPEAFTARGQQSWLQAEMAALKIMTAYGTGTTGLLTERDWFLLAPAVRPGPVWEGNHFARLLALLALRKNPAHRGAVRRTLEAVTADLRPDGGLPFITGMDIFATAIAGLALTGPAACAHAGHRPVRCGTGPLPAAMADALATRQNPDGGFAFTPGVRQSDVDDTSYTVEFLRVAGPYRHRSAIAAAERYLLAVRNPDGGFPTFARGTPSEIAMTAAAVNALAPNPAHRTVVDEALAFLTRRRQPDGILERSWSRNVTNAVFRTTLACAAAGPGAPPGLSRAAGTTKRQATRYLASVQNLDGGWGHHPGDASDPISTAYAVIALSRDGGHPTALARALDHLVRAQRPDGGYRSRPDQAGPRPLLYDVPALADVCVLLGLAHAVGPTARPRV.

Residues Arg-121, Lys-122, Gln-152, and Trp-154 each coordinate (2E,6E)-farnesyl diphosphate. A Mg(2+)-binding site is contributed by Glu-158. PFTB repeat units lie at residues 275-317 (PAAM…RVAG), 325-367 (IAAA…APNP), 428-469 (KRQA…SRDG), and 475-518 (LARA…CVLL). Catalysis depends on Asp-304, which acts as the Proton donor. Arg-502 provides a ligand contact to (2E,6E)-farnesyl diphosphate.

The protein belongs to the terpene cyclase/mutase family. Requires Mg(2+) as cofactor. Ni(2+) is required as a cofactor. It depends on Co(2+) as a cofactor.

The catalysed reaction is (2E,6E)-farnesyl diphosphate = (5S,9S,10S)-drim-7-en-11-yl diphosphate. Functionally, catalyzes the cyclization of farnesyl diphosphate (FPP) to drimenyl diphosphate. In Streptantibioticus cattleyicolor (strain ATCC 35852 / DSM 46488 / JCM 4925 / NBRC 14057 / NRRL 8057) (Streptomyces cattleya), this protein is Drimenyl diphosphate synthase.